We begin with the raw amino-acid sequence, 317 residues long: tRNA dimethylallyltransferase (317 aa).

14–21 provides a ligand contact to ATP; it reads GPTASGKT. Substrate is bound at residue 16–21; that stretch reads TASGKT. Interaction with substrate tRNA stretches follow at residues 39–42 and 163–167; these read DSAL and QRIQR.

The protein belongs to the IPP transferase family. In terms of assembly, monomer. Mg(2+) is required as a cofactor.

The catalysed reaction is adenosine(37) in tRNA + dimethylallyl diphosphate = N(6)-dimethylallyladenosine(37) in tRNA + diphosphate. Functionally, catalyzes the transfer of a dimethylallyl group onto the adenine at position 37 in tRNAs that read codons beginning with uridine, leading to the formation of N6-(dimethylallyl)adenosine (i(6)A). This is tRNA dimethylallyltransferase from Stenotrophomonas maltophilia (strain R551-3).